Reading from the N-terminus, the 259-residue chain is Phosphatidylglycerol--prolipoprotein diacylglyceryl transferase (259 aa).

Helical transmembrane passes span 10 to 30 (IGLL…LFAY), 50 to 70 (IISW…ILFY), 86 to 106 (WKGG…MYIF), and 112 to 132 (IKFL…IFLG). An a 1,2-diacyl-sn-glycero-3-phospho-(1'-sn-glycerol)-binding site is contributed by R133. Helical transmembrane passes span 169 to 189 (LYEA…LFFF), 197 to 217 (GMLF…IEFV), and 227 to 247 (ILFN…ILGI).

The protein belongs to the Lgt family.

It is found in the cell inner membrane. The catalysed reaction is L-cysteinyl-[prolipoprotein] + a 1,2-diacyl-sn-glycero-3-phospho-(1'-sn-glycerol) = an S-1,2-diacyl-sn-glyceryl-L-cysteinyl-[prolipoprotein] + sn-glycerol 1-phosphate + H(+). Its pathway is protein modification; lipoprotein biosynthesis (diacylglyceryl transfer). In terms of biological role, catalyzes the transfer of the diacylglyceryl group from phosphatidylglycerol to the sulfhydryl group of the N-terminal cysteine of a prolipoprotein, the first step in the formation of mature lipoproteins. The polypeptide is Phosphatidylglycerol--prolipoprotein diacylglyceryl transferase (Ehrlichia ruminantium (strain Gardel)).